Here is a 355-residue protein sequence, read N- to C-terminus: N5-carboxyaminoimidazole ribonucleotide synthase (355 aa).

ATP-binding positions include R80, K120, 125 to 131, 153 to 156, E161, H184, and 237 to 238; these read GYDGRGQ, EQGI, and NE. An ATP-grasp domain is found at 84-267; that stretch reads KQLFDKLHLP…QFELHLRAIT (184 aa).

Belongs to the PurK/PurT family. In terms of assembly, homodimer.

The enzyme catalyses 5-amino-1-(5-phospho-beta-D-ribosyl)imidazole + hydrogencarbonate + ATP = 5-carboxyamino-1-(5-phospho-D-ribosyl)imidazole + ADP + phosphate + 2 H(+). Its pathway is purine metabolism; IMP biosynthesis via de novo pathway; 5-amino-1-(5-phospho-D-ribosyl)imidazole-4-carboxylate from 5-amino-1-(5-phospho-D-ribosyl)imidazole (N5-CAIR route): step 1/2. Catalyzes the ATP-dependent conversion of 5-aminoimidazole ribonucleotide (AIR) and HCO(3)(-) to N5-carboxyaminoimidazole ribonucleotide (N5-CAIR). This is N5-carboxyaminoimidazole ribonucleotide synthase from Escherichia coli (strain K12).